Here is a 436-residue protein sequence, read N- to C-terminus: L-threonine dehydratase biosynthetic IlvA (436 aa).

Residues 1-357 (MSETYVSEKS…HRGLKHYFLV (357 aa)) form a catalytic region. The residue at position 70 (K70) is an N6-(pyridoxal phosphate)lysine. Pyridoxal 5'-phosphate is bound by residues N97, 203–207 (GGGGL), and S329. The 75-residue stretch at 353–427 (HYFLVNFPQK…SAIDSRRLEP (75 aa)) folds into the ACT-like domain. Residues 358-436 (NFPQKPGQLR…PGTPEYEYLT (79 aa)) form a regulatory region.

The protein belongs to the serine/threonine dehydratase family. In terms of assembly, homotetramer. Pyridoxal 5'-phosphate is required as a cofactor.

It catalyses the reaction L-threonine = 2-oxobutanoate + NH4(+). It functions in the pathway amino-acid biosynthesis; L-isoleucine biosynthesis; 2-oxobutanoate from L-threonine: step 1/1. Catalyzes the anaerobic formation of alpha-ketobutyrate and ammonia from threonine in a two-step reaction. The first step involved a dehydration of threonine and a production of enamine intermediates (aminocrotonate), which tautomerizes to its imine form (iminobutyrate). Both intermediates are unstable and short-lived. The second step is the nonenzymatic hydrolysis of the enamine/imine intermediates to form 2-ketobutyrate and free ammonia. In the low water environment of the cell, the second step is accelerated by RidA. In Corynebacterium glutamicum (strain ATCC 13032 / DSM 20300 / JCM 1318 / BCRC 11384 / CCUG 27702 / LMG 3730 / NBRC 12168 / NCIMB 10025 / NRRL B-2784 / 534), this protein is L-threonine dehydratase biosynthetic IlvA (ilvA).